We begin with the raw amino-acid sequence, 1164 residues long: Auxin response factor 7 (1164 aa).

Residues 127–229 (FCKTLTASDT…QLLLGIRRAN (103 aa)) constitute a DNA-binding region (TF-B3). Disordered regions lie at residues 451–505 (HNNL…QQQL), 536–555 (QQLQ…QQQQ), 570–728 (HQQP…LLQQ), 765–858 (FLSP…SSSG), and 903–930 (KSKA…GENN). Residues 464–489 (LSFQTPHGGISSSNLQFNKQNQQAPM) are compositionally biased toward polar residues. Residues 570–635 (HQQPLQQQTQ…SQQASTHHLQ (66 aa)) show a composition bias toward low complexity. A compositionally biased stretch (polar residues) spans 637–651 (QLVSGSMASSVITPP). Low complexity predominate over residues 652–671 (SSSLNQSFQQQQQQSKQLQQ). A compositionally biased stretch (polar residues) spans 678–710 (ASTSQSSVIETSKSSSNLMSAPPQETQFSRQVE). Composition is skewed to low complexity over residues 711-728 (QQQP…LLQQ) and 765-790 (FLSP…TLSQ). Positions 791–808 (GHQFPSSCTNNGLSTLQP) are enriched in polar residues. A compositionally biased stretch (low complexity) spans 841 to 851 (PSSSTSPSTNN). Over residues 903 to 921 (KSKASLTDHQLEASASGTS) the composition is skewed to polar residues. The PB1 domain maps to 1037–1130 (RTYTKVQKRG…EVQQMSLDGN (94 aa)). Residues 1145–1164 (DSGNAWRGHYDDNSATSFNR) are disordered.

The protein belongs to the ARF family. Homodimers and heterodimers. Interacts with the auxin-responsive proteins IAA1 and IAA12 (BODENLOS). Interacts (via PB1 domain) with IAA17 (via PB1 domain). Interacts with IAA19. Interacts with ARF5. Binds to JMJ30. Binds to ATXR2 in the nucleus. As to expression, expressed in the whole plant.

The protein resides in the nucleus. Functionally, auxin response factors (ARFs) are transcriptional factors that bind specifically to the DNA sequence 5'-TGTCTC-3' found in the auxin-responsive promoter elements (AuxREs). Acts as a transcriptional activator of several tropic stimulus-induced (TSI) genes, including SAUR50. Formation of heterodimers with Aux/IAA proteins may alter their ability to modulate early auxin response genes expression. Required for differential growth responses of aerial tissues. Involved in ethylene responses. Regulates lateral root formation through direct regulation of LBD16 and/or LBD29. Functionally redundant with ARF19. Mediates embryo axis formation and vascular tissues differentiation. Functionally redundant with ARF5. Involved in cellular dedifferentiation during callus formation on callus-inducing medium (CIM) and in an ATXR2-dependent manner. This is Auxin response factor 7 from Arabidopsis thaliana (Mouse-ear cress).